The chain runs to 179 residues: MAKLHDYYKDEVVKKLMTEFNYNSVMQVPRVEKITLNMGVGEAIADKKLLDNAAADLTAISGQKPLITKARKSVAGFKIRQGYPIGCKVTLRGERMWEFFERLITIAVPRIRDFRGLSAKSFDGRGNYSMGVREQIIFPEIDYDKVDRVRGLDITITTTAKSDEEGRALLAAFDFPFRK.

Belongs to the universal ribosomal protein uL5 family. In terms of assembly, part of the 50S ribosomal subunit; part of the 5S rRNA/L5/L18/L25 subcomplex. Contacts the 5S rRNA and the P site tRNA. Forms a bridge to the 30S subunit in the 70S ribosome.

Functionally, this is one of the proteins that bind and probably mediate the attachment of the 5S RNA into the large ribosomal subunit, where it forms part of the central protuberance. In the 70S ribosome it contacts protein S13 of the 30S subunit (bridge B1b), connecting the 2 subunits; this bridge is implicated in subunit movement. Contacts the P site tRNA; the 5S rRNA and some of its associated proteins might help stabilize positioning of ribosome-bound tRNAs. The chain is Large ribosomal subunit protein uL5 from Salmonella arizonae (strain ATCC BAA-731 / CDC346-86 / RSK2980).